A 136-amino-acid polypeptide reads, in one-letter code: Large ribosomal subunit protein bL17 (136 aa).

The protein belongs to the bacterial ribosomal protein bL17 family. Part of the 50S ribosomal subunit. Contacts protein L32.

This chain is Large ribosomal subunit protein bL17, found in Rickettsia africae (strain ESF-5).